The sequence spans 413 residues: Tryptophan synthase beta chain (413 aa).

The residue at position 107 (Lys-107) is an N6-(pyridoxal phosphate)lysine.

Belongs to the TrpB family. In terms of assembly, tetramer of two alpha and two beta chains. Pyridoxal 5'-phosphate serves as cofactor.

The catalysed reaction is (1S,2R)-1-C-(indol-3-yl)glycerol 3-phosphate + L-serine = D-glyceraldehyde 3-phosphate + L-tryptophan + H2O. It functions in the pathway amino-acid biosynthesis; L-tryptophan biosynthesis; L-tryptophan from chorismate: step 5/5. Its function is as follows. The beta subunit is responsible for the synthesis of L-tryptophan from indole and L-serine. In Trichormus variabilis (strain ATCC 29413 / PCC 7937) (Anabaena variabilis), this protein is Tryptophan synthase beta chain.